A 956-amino-acid polypeptide reads, in one-letter code: DNA replication helicase (956 aa).

120–127 serves as a coordination point for ATP; it reads GTAGAGKT. The tract at residues 658-694 is disordered; the sequence is PINNHVDADSSQGGQSVPVSQRMEHGQEETHDIPCLS. A compositionally biased stretch (low complexity) spans 667–678; it reads SSQGGQSVPVSQ. Residues 679-694 show a composition bias toward basic and acidic residues; that stretch reads RMEHGQEETHDIPCLS.

It belongs to the herpesviridae helicase family. As to quaternary structure, associates with the primase and the primase-associated factor to form the helicase-primase complex.

The protein resides in the host nucleus. Its function is as follows. Component of the helicase/primase complex. Unwinds the DNA at the replication forks and generates single-stranded DNA for both leading and lagging strand synthesis. The primase synthesizes short RNA primers on the lagging strand that the polymerase elongates using dNTPs. Possesses helicase-like motifs and therefore may act as the helicase subunit of the complex. The chain is DNA replication helicase from Human cytomegalovirus (strain Merlin) (HHV-5).